We begin with the raw amino-acid sequence, 258 residues long: Imidazole glycerol phosphate synthase subunit HisF (258 aa).

Residues Asp-11 and Asp-130 contribute to the active site.

Belongs to the HisA/HisF family. In terms of assembly, heterodimer of HisH and HisF.

It is found in the cytoplasm. The enzyme catalyses 5-[(5-phospho-1-deoxy-D-ribulos-1-ylimino)methylamino]-1-(5-phospho-beta-D-ribosyl)imidazole-4-carboxamide + L-glutamine = D-erythro-1-(imidazol-4-yl)glycerol 3-phosphate + 5-amino-1-(5-phospho-beta-D-ribosyl)imidazole-4-carboxamide + L-glutamate + H(+). The protein operates within amino-acid biosynthesis; L-histidine biosynthesis; L-histidine from 5-phospho-alpha-D-ribose 1-diphosphate: step 5/9. Functionally, IGPS catalyzes the conversion of PRFAR and glutamine to IGP, AICAR and glutamate. The HisF subunit catalyzes the cyclization activity that produces IGP and AICAR from PRFAR using the ammonia provided by the HisH subunit. This is Imidazole glycerol phosphate synthase subunit HisF from Methylobacterium sp. (strain 4-46).